A 446-amino-acid chain; its full sequence is CBL-interacting protein kinase 8 (446 aa).

In terms of domain architecture, Protein kinase spans 13 to 266 (YEVGRTIGEG…IEEIRNDEWF (254 aa)). ATP contacts are provided by residues 19–27 (IGEGTFAKV) and K42. D136 functions as the Proton acceptor in the catalytic mechanism. The tract at residues 154–181 (DFGLSAWPAQGGALLRTTCGTPNYVAPE) is activation loop. Positions 301 to 329 (LDDEAGPLTLNAFDLIILSQGLNLAALFD) constitute an NAF domain. The interval 336-365 (KLQNRFLSRKPAKVIMSSMEVVAQSMGYKT) is PPI.

The protein belongs to the protein kinase superfamily. CAMK Ser/Thr protein kinase family. SNF1 subfamily. It depends on Mn(2+) as a cofactor.

The catalysed reaction is L-seryl-[protein] + ATP = O-phospho-L-seryl-[protein] + ADP + H(+). It carries out the reaction L-threonyl-[protein] + ATP = O-phospho-L-threonyl-[protein] + ADP + H(+). Its function is as follows. CIPK serine-threonine protein kinases interact with CBL proteins. Binding of a CBL protein to the regulatory NAF domain of CIPK protein lead to the activation of the kinase in a calcium-dependent manner. The chain is CBL-interacting protein kinase 8 (CIPK8) from Oryza sativa subsp. japonica (Rice).